A 294-amino-acid chain; its full sequence is Aquaporin NIP1-2 (294 aa).

Met1 carries the N-acetylmethionine modification. A run of 2 helical transmembrane segments spans residues 54–74 (LMAE…AVAV) and 82–102 (VTLP…VYSL). Residues 111-113 (NPA) carry the NPA 1 motif. Transmembrane regions (helical) follow at residues 133-153 (VISQ…LFGL), 177-197 (SFVI…GVAT), and 201-221 (AIGE…VIIA). The short motif at 230–232 (NPG) is the NPA 2 element. Residues 248–268 (WIYIVSPIVGAVSGAWVYNMV) traverse the membrane as a helical segment. Ser283 is modified (phosphoserine).

This sequence belongs to the MIP/aquaporin (TC 1.A.8) family. NIP (TC 1.A.8.12) subfamily. As to expression, expressed in developing seeds.

Its subcellular location is the membrane. Its function is as follows. Water channel probably required to promote glycerol permeability and water transport across cell membranes. In Arabidopsis thaliana (Mouse-ear cress), this protein is Aquaporin NIP1-2 (NIP1-2).